We begin with the raw amino-acid sequence, 260 residues long: Snake venom serine protease homolog KN7 (260 aa).

Positions 1 to 18 are cleaved as a signal peptide; that stretch reads MVLIRVLANLLILQLSYA. The propeptide occupies 19 to 24; sequence QKSSEL. Residues 25 to 251 enclose the Peptidase S1 domain; the sequence is IIGGDECNIN…HLDWIKSIIA (227 aa). 6 cysteine pairs are disulfide-bonded: C31-C165, C52-C68, C100-C258, C144-C212, C176-C191, and C202-C227. N-linked (GlcNAc...) asparagine glycosylation is found at N83, N123, and N124.

The protein belongs to the peptidase S1 family. Snake venom subfamily. Expressed by the venom gland.

It is found in the secreted. Functionally, snake venom serine protease homolog that may act in the hemostasis system of the prey. The chain is Snake venom serine protease homolog KN7 from Trimeresurus stejnegeri (Chinese green tree viper).